We begin with the raw amino-acid sequence, 102 residues long: ATP-dependent Clp protease adapter protein ClpS (102 aa).

This sequence belongs to the ClpS family. As to quaternary structure, binds to the N-terminal domain of the chaperone ClpA.

Involved in the modulation of the specificity of the ClpAP-mediated ATP-dependent protein degradation. The chain is ATP-dependent Clp protease adapter protein ClpS from Shewanella pealeana (strain ATCC 700345 / ANG-SQ1).